Reading from the N-terminus, the 510-residue chain is MEALSMVGSGGVYSWPAALLVAAIVVSASVRWWGIKRQPTTTESKARLPRGSLGWPVVGETLAFISAAYSAQPESFVDKRRLLYGKVFKSHLWGSKAVVSSDAEVSRAVLQADASAFVPWYPSSLMQLMGESSILVLGGGLQRRVHGLAGAFFKSPQLKARLTVDMQRRVADAMDAWQCHGVVRVQDEAKSIVFEILVKALIGLEPGQEMHYLKQQFREFIAGLISLPIKLPGTQLYRSIQAKKRMAKLIQKIVQEKREKRMGGNNNATCKAPRDMIDVLMSNGSEELTDELISDNMIDFMIPAEDSVPVLITLAVKYLSECPLALEQLEEENMELKKRKSAVGGTLEWTDYMSLAFTQHVITETLRIGNIINGIMRKAVKDVEVKGQLLIPQGWCVFLYFRSVHLDGHIYDDPYAFNPWRWKERDMMAASSGFTPFGGGQRLCPGVDLARLEASIFLHHLVTTFRWEAEDDTVVTFPTVRLKRGMPIRVSQNIETSGTATFRSTESASV.

The chain crosses the membrane as a helical span at residues 6–26; the sequence is MVGSGGVYSWPAALLVAAIVV. A heme-binding site is contributed by Cys-444.

Belongs to the cytochrome P450 family. Heme serves as cofactor.

The protein resides in the membrane. The catalysed reaction is 3-epi-6-deoxocathasterone + reduced [NADPH--hemoprotein reductase] + O2 = 6-deoxotyphasterol + oxidized [NADPH--hemoprotein reductase] + H2O + H(+). It carries out the reaction (22S,24R)-22-hydroxy-5alpha-ergostan-3-one + reduced [NADPH--hemoprotein reductase] + O2 = 3-dehydro-6-deoxoteasterone + oxidized [NADPH--hemoprotein reductase] + H2O + H(+). The enzyme catalyses 6-deoxycathasterone + reduced [NADPH--hemoprotein reductase] + O2 = 6-deoxoteasterone + oxidized [NADPH--hemoprotein reductase] + H2O + H(+). It participates in plant hormone biosynthesis; brassinosteroid biosynthesis. In terms of biological role, involved in reduction steps of the biosynthesis of plant campesterol-derivative steroids, ending to castasterone (CS) but missing brassinolide (BL). Catalyzes the conversion of (22S,24R)-22-hydroxy-5alpha-ergostan-3-one (22-hydroxy-campesta-3-one, 22-OH-3-one) to 3-dehydro-6-deoxoteasterone (6-deoxo3DT, 6-deoxo-3-DHT), 3-epi-6-deoxocathasterone (3-epi-6-deoxoCT) to 6-deoxotyphasterol (6-deoxoTY) and of 6-deoxocathasterone (6-deoxoCT) to 6-deoxoteasterone (6-deoxoTE). This Brachypodium distachyon (Purple false brome) protein is Cytochrome P450 90D2.